A 496-amino-acid polypeptide reads, in one-letter code: MQLVVKSTSPQTLKTATLVVAVGEGRKLGATAKAIDQAADGALSAALKRGDLAGKVGQTLLLHAVPNLKAERVLLVGAGKEGELSDRQFRKIAAATYGALKGLGGSDAALTLGELQVKGRDTYGKTRLLAETLLDATYAFDRFKSEKASAPVLKKLVLLCDKAGQAEVERAASHAQAIVDGMALTRDLGNLPPNLCHPTSLASEAKALAKTYDTLKVEVLDEKKLKELGMGAFLAVAQGSDQPPRLIVLDYQGGKKDEQPFVLVGKGITFDSGGISLKPGSGMDEMKYDMCGAASVLGTFRALLELALPINVVGLLACAENMPSGGATRPGDIVTSMSGQTVEILNTDAEGRLVLCDALTYAERFKPQAVIDIATLTGACITALGTQASGLMGNDDDLIRQVLEAGEHAADRAWQLPLFEEYQEQLDSPFADMANIGGPKAGTITAACFLSRFAKNYHWAHLDIAGTAWISGGKEKGATGRPVPLLTQFLLDRSAP.

Residues K266 and D271 each contribute to the Mn(2+) site. Residue K278 is part of the active site. Mn(2+) is bound by residues D289, D348, and E350. R352 is a catalytic residue.

It belongs to the peptidase M17 family. Mn(2+) serves as cofactor.

The protein resides in the cytoplasm. The catalysed reaction is Release of an N-terminal amino acid, Xaa-|-Yaa-, in which Xaa is preferably Leu, but may be other amino acids including Pro although not Arg or Lys, and Yaa may be Pro. Amino acid amides and methyl esters are also readily hydrolyzed, but rates on arylamides are exceedingly low.. It catalyses the reaction Release of an N-terminal amino acid, preferentially leucine, but not glutamic or aspartic acids.. In terms of biological role, presumably involved in the processing and regular turnover of intracellular proteins. Catalyzes the removal of unsubstituted N-terminal amino acids from various peptides. This chain is Probable cytosol aminopeptidase, found in Azotobacter vinelandii (strain DJ / ATCC BAA-1303).